Reading from the N-terminus, the 195-residue chain is Ribonuclease HII (195 aa).

The RNase H type-2 domain occupies 1–195 (MICGIDEAGR…SWRTLRYLNT (195 aa)). The a divalent metal cation site is built by D6, E7, and D101.

The protein belongs to the RNase HII family. Mn(2+) serves as cofactor. It depends on Mg(2+) as a cofactor.

Its subcellular location is the cytoplasm. The enzyme catalyses Endonucleolytic cleavage to 5'-phosphomonoester.. Endonuclease that specifically degrades the RNA of RNA-DNA hybrids. The chain is Ribonuclease HII from Pyrobaculum islandicum (strain DSM 4184 / JCM 9189 / GEO3).